A 262-amino-acid chain; its full sequence is Adenosylcobinamide-GDP ribazoletransferase (262 aa).

A run of 5 helical transmembrane segments spans residues 41-63 (AFPF…LMAL), 68-85 (LFAA…TGAL), 115-134 (IGTY…VSAF), 141-163 (FSPL…AMVW), and 201-221 (LLFY…VAFL).

This sequence belongs to the CobS family. As to quaternary structure, associated with a large complex of proteins. Mg(2+) serves as cofactor.

It localises to the cell inner membrane. The catalysed reaction is alpha-ribazole + adenosylcob(III)inamide-GDP = adenosylcob(III)alamin + GMP + H(+). It carries out the reaction alpha-ribazole 5'-phosphate + adenosylcob(III)inamide-GDP = adenosylcob(III)alamin 5'-phosphate + GMP + H(+). It participates in cofactor biosynthesis; adenosylcobalamin biosynthesis; adenosylcobalamin from cob(II)yrinate a,c-diamide: step 7/7. Its function is as follows. Joins adenosylcobinamide-GDP and alpha-ribazole to generate adenosylcobalamin (Ado-cobalamin). Also synthesizes adenosylcobalamin 5'-phosphate from adenosylcobinamide-GDP and alpha-ribazole 5'-phosphate. The sequence is that of Adenosylcobinamide-GDP ribazoletransferase (cobV) from Sinorhizobium sp.